We begin with the raw amino-acid sequence, 222 residues long: Protein CicA (222 aa).

The sequence is that of Protein CicA (cicA) from Caulobacter vibrioides (strain ATCC 19089 / CIP 103742 / CB 15) (Caulobacter crescentus).